A 128-amino-acid polypeptide reads, in one-letter code: Aspartate 1-decarboxylase (128 aa).

Serine 25 functions as the Schiff-base intermediate with substrate; via pyruvic acid in the catalytic mechanism. Serine 25 carries the post-translational modification Pyruvic acid (Ser). Threonine 57 serves as a coordination point for substrate. Residue tyrosine 58 is the Proton donor of the active site. 73 to 75 (GAA) is a substrate binding site.

Belongs to the PanD family. In terms of assembly, heterooctamer of four alpha and four beta subunits. Requires pyruvate as cofactor. In terms of processing, is synthesized initially as an inactive proenzyme, which is activated by self-cleavage at a specific serine bond to produce a beta-subunit with a hydroxyl group at its C-terminus and an alpha-subunit with a pyruvoyl group at its N-terminus.

It localises to the cytoplasm. The catalysed reaction is L-aspartate + H(+) = beta-alanine + CO2. The protein operates within cofactor biosynthesis; (R)-pantothenate biosynthesis; beta-alanine from L-aspartate: step 1/1. Catalyzes the pyruvoyl-dependent decarboxylation of aspartate to produce beta-alanine. This chain is Aspartate 1-decarboxylase, found in Ruminiclostridium cellulolyticum (strain ATCC 35319 / DSM 5812 / JCM 6584 / H10) (Clostridium cellulolyticum).